Consider the following 257-residue polypeptide: UPF0246 protein swp_3736 (257 aa).

It belongs to the UPF0246 family.

The polypeptide is UPF0246 protein swp_3736 (Shewanella piezotolerans (strain WP3 / JCM 13877)).